The sequence spans 429 residues: Serine hydroxymethyltransferase (429 aa).

120–122 (GHI) is a (6S)-5,6,7,8-tetrahydrofolate binding site. At K226 the chain carries N6-(pyridoxal phosphate)lysine.

The protein belongs to the SHMT family. In terms of assembly, homodimer. It depends on pyridoxal 5'-phosphate as a cofactor.

The protein resides in the cytoplasm. The enzyme catalyses 5,10-methylenetetrahydromethanopterin + glycine + H2O = 5,6,7,8-tetrahydromethanopterin + L-serine. It catalyses the reaction L-allo-threonine = acetaldehyde + glycine. It participates in amino-acid biosynthesis; glycine biosynthesis; glycine from L-serine: step 1/1. Its function is as follows. Catalyzes the reversible interconversion of serine and glycine with tetrahydromethanopterin (H4MPT) serving as the one-carbon carrier. The use of tetrahydrofolate (THF or H4PteGlu) as the pteridine substrate is 450-fold less efficient than that of H4MPT. Also exhibits a pteridine-independent aldolase activity toward beta-hydroxyamino acids, producing glycine and aldehydes, via a retro-aldol mechanism. Thus, is able to catalyze the cleavage of L-allo-threonine and L-threo-beta-phenylserine. This is Serine hydroxymethyltransferase from Methanocaldococcus jannaschii (strain ATCC 43067 / DSM 2661 / JAL-1 / JCM 10045 / NBRC 100440) (Methanococcus jannaschii).